The primary structure comprises 124 residues: Small ribosomal subunit protein uS13 (124 aa).

Residues glycine 95–arginine 124 form a disordered region.

The protein belongs to the universal ribosomal protein uS13 family. In terms of assembly, part of the 30S ribosomal subunit. Forms a loose heterodimer with protein S19. Forms two bridges to the 50S subunit in the 70S ribosome.

Functionally, located at the top of the head of the 30S subunit, it contacts several helices of the 16S rRNA. In the 70S ribosome it contacts the 23S rRNA (bridge B1a) and protein L5 of the 50S subunit (bridge B1b), connecting the 2 subunits; these bridges are implicated in subunit movement. Contacts the tRNAs in the A and P-sites. In Mycobacterium marinum (strain ATCC BAA-535 / M), this protein is Small ribosomal subunit protein uS13.